The sequence spans 83 residues: Cell division topological specificity factor (83 aa).

Belongs to the MinE family.

In terms of biological role, prevents the cell division inhibition by proteins MinC and MinD at internal division sites while permitting inhibition at polar sites. This ensures cell division at the proper site by restricting the formation of a division septum at the midpoint of the long axis of the cell. The sequence is that of Cell division topological specificity factor from Pseudoalteromonas atlantica (strain T6c / ATCC BAA-1087).